Consider the following 334-residue polypeptide: Phosphate acyltransferase (334 aa).

The protein belongs to the PlsX family. Homodimer. Probably interacts with PlsY.

The protein resides in the cytoplasm. The catalysed reaction is a fatty acyl-[ACP] + phosphate = an acyl phosphate + holo-[ACP]. Its pathway is lipid metabolism; phospholipid metabolism. Catalyzes the reversible formation of acyl-phosphate (acyl-PO(4)) from acyl-[acyl-carrier-protein] (acyl-ACP). This enzyme utilizes acyl-ACP as fatty acyl donor, but not acyl-CoA. The polypeptide is Phosphate acyltransferase (Streptococcus thermophilus (strain ATCC BAA-491 / LMD-9)).